Reading from the N-terminus, the 1220-residue chain is MASDPRDPGPAGGVFGDLPPSYTRSPPPVNSDLLRRPSYCHAAFALKQISKGKAVGQKAPLWIRARFQAFLFSLGCHIQRHCGKVLFIGLLVFGALSVGLRVAAIETDIEKLWVEAGSRVSKELRYTKEKQGEESVFTSQMLIQTPKQEGTNILTQEALLLHLEAALSASKVQVSLYGKSWDLNKICFKSGVPIIENVMIERMIDKLFPCMIVTPLDCFWEGSKLQGGSAYLPGMPDIQWMNLDPLKLMEELSQFTSLEGFREMLDKAQVGHAYMNRPCLDPSDTDCPHSAPNKDPWQVPNIAAELQGGCHGFSKKFMHWQEELILGERVKDSQNALQSAEALQTMFLLMSPKQLYEHFKDDYEIHDINWNEDKATAILESWQRKFVEVVHGSIPQNSSSNVYAFSTTTLNDIMKSFSDVSVIRVAGGYLLMLAYACVTMLRWDCAKSQGAVGLAGVLLVALSVAAGLGLCSLLGLSFNAATTQVLPSLALGIGVDDMFLLGHSFTETRSNIPFKERTGDCLRRTGTSVALTSVNNMIAFFMAALVPIPALRAFSLQAAVVVVFNFAMALLIFPAILSLDLHRREDKRLDILCCFYSPCSSRVIQIQPQELSDANDNHQRAPATPTYTGSTITTSTHITTTVQAFTQCDAAGQHIVTILPPTSQISTTPPSMVLSTPTPTTDPYGSQVFTTSSSTRDLLAQVEEPKEGRECVPLPFFRWNLSSFAREKYAPLLLKPETKTVVVVVFVALLSLSLYGTTMVHDGLYLTDIVPRDTQEYEFITAQFKYFSFYNMYLVTMDGFDYARSQRQLLQLHNAFNSVKYVVKDGNHKLPRMWLHYFQDWLKGLQATFDADWEAGKITYDSYRNGTEDGALAYKPLIQTGSKKEPFNYSQLTSRRLVDGDGLIPPEVFYIYLTVWVSNDPLGYAASQANFYPHPREWIHDKYDTTGENLRIPAAEPLEFAQFPFYLNGLRQASDFIEAIESVRTICEEFMRQGIKNYPNGYPFLFWEQYIGLRHWFLLSISVVLACTFLVCAILLLNPWTAGVIVFILPMMTVELFGIMGLIGIKLSAIPVVILIASVGIGVEFTVHIALGFLTAIGDRNTRSAVAMEHMFAPVIDGAISTLLGVLMLAGSEFDFIMRYFFAVLAILTLLGILNGLVLLPVLLSLMGPPAEVVPANNANHLQSPSPEPMPPPMNHHGYYAGHIPKASHQAFSETSDSEY.

The disordered stretch occupies residues Met-1 to Pro-27. The Cytoplasmic portion of the chain corresponds to Met-1 to Lys-84. Residues Val-85–Ile-105 form a helical membrane-spanning segment. The Extracellular segment spans residues Glu-106 to Asp-419. Asn-397 is a glycosylation site (N-linked (GlcNAc...) asparagine). Residues Val-420–Met-440 traverse the membrane as a helical segment. The SSD domain maps to Ser-421 to Leu-579. The Cytoplasmic segment spans residues Leu-441 to Gln-449. Residues Gly-450–Leu-470 form a helical membrane-spanning segment. The Extracellular portion of the chain corresponds to Cys-471 to Gln-484. Residues Val-485–Phe-505 form a helical membrane-spanning segment. Residues Thr-506 to Ser-528 are Cytoplasmic-facing. A helical membrane pass occupies residues Val-529 to Pro-549. The Extracellular portion of the chain corresponds to Ala-550 to Ala-558. A helical transmembrane segment spans residues Ala-559–Leu-579. The Cytoplasmic portion of the chain corresponds to Asp-580–Lys-739. A helical membrane pass occupies residues Thr-740–Val-760. The Extracellular portion of the chain corresponds to His-761–Trp-1016. Residues Asn-865 and Asn-888 are each glycosylated (N-linked (GlcNAc...) asparagine). Residues Phe-1017–Leu-1037 form a helical membrane-spanning segment. The Cytoplasmic segment spans residues Asn-1038 to Val-1044. A helical transmembrane segment spans residues Ile-1045–Ile-1065. The Extracellular segment spans residues Lys-1066–Val-1072. Residues Val-1073–Phe-1093 form a helical membrane-spanning segment. Topologically, residues Leu-1094–His-1110 are cytoplasmic. Residues Met-1111–Gly-1131 traverse the membrane as a helical segment. At Ser-1132–Ala-1143 the chain is on the extracellular side. A helical membrane pass occupies residues Val-1144–Leu-1164. At Ser-1165 to Tyr-1220 the chain is on the cytoplasmic side.

This sequence belongs to the patched family. Post-translationally, glycosylation is necessary for SHH binding. Detected in embryonic presomitic mesoderm, neuroectoderm, tissue surrounding the notochord, ventral neural tube.

It is found in the membrane. Its function is as follows. Acts as a receptor for sonic hedgehog (SHH), indian hedgehog (IHH) and desert hedgehog (DHH). Associates with the smoothened protein (SMO) to transduce the hedgehog's proteins signal. The protein is Protein patched homolog 1 (ptch1) of Danio rerio (Zebrafish).